Consider the following 172-residue polypeptide: Translation initiation factor IF-3 (172 aa).

It belongs to the IF-3 family. Monomer.

It localises to the cytoplasm. IF-3 binds to the 30S ribosomal subunit and shifts the equilibrium between 70S ribosomes and their 50S and 30S subunits in favor of the free subunits, thus enhancing the availability of 30S subunits on which protein synthesis initiation begins. In Bartonella quintana (strain Toulouse) (Rochalimaea quintana), this protein is Translation initiation factor IF-3.